Reading from the N-terminus, the 536-residue chain is Phosphoenolpyruvate carboxykinase (ATP) (536 aa).

The substrate site is built by Arg61, Tyr195, and Lys201. Residues Lys201, His220, and Gly236–Thr244 contribute to the ATP site. Mn(2+) contacts are provided by Lys201 and His220. Residue Asp257 coordinates Mn(2+). Residues Glu285, Arg322, and Thr447 each coordinate ATP. Arg322 contributes to the substrate binding site.

This sequence belongs to the phosphoenolpyruvate carboxykinase (ATP) family. It depends on Mn(2+) as a cofactor.

It is found in the cytoplasm. The catalysed reaction is oxaloacetate + ATP = phosphoenolpyruvate + ADP + CO2. It functions in the pathway carbohydrate biosynthesis; gluconeogenesis. Its function is as follows. Involved in the gluconeogenesis. Catalyzes the conversion of oxaloacetate (OAA) to phosphoenolpyruvate (PEP) through direct phosphoryl transfer between the nucleoside triphosphate and OAA. This Rhizobium etli (strain ATCC 51251 / DSM 11541 / JCM 21823 / NBRC 15573 / CFN 42) protein is Phosphoenolpyruvate carboxykinase (ATP).